Reading from the N-terminus, the 294-residue chain is Enoyl-CoA hydratase domain-containing protein 3, mitochondrial (294 aa).

The N-terminal 61 residues, 1–61, are a transit peptide targeting the mitochondrion; that stretch reads MSWLRSCGER…IILNNPQQRN (61 aa).

It belongs to the enoyl-CoA hydratase/isomerase family.

Its subcellular location is the mitochondrion. Its function is as follows. May play a role in fatty acid biosynthesis and insulin sensitivity. The sequence is that of Enoyl-CoA hydratase domain-containing protein 3, mitochondrial (echdc3) from Xenopus laevis (African clawed frog).